A 1095-amino-acid polypeptide reads, in one-letter code: Formin-like protein 2 (1095 aa).

A GBD/FH3 domain is found at Leu23–Glu469. The stretch at Leu381–Gln478 forms a coiled coil. Residues Pro521–Ser602 are disordered. Pro residues-rich tracts occupy residues Gly524 to Pro534, Ala548 to Gly576, and Pro583 to Pro599. Positions Ile617 to Ala1008 constitute an FH2 domain.

It belongs to the formin homology family. In terms of assembly, interacts with TCP11L2; this interaction promotes muscle-derived satellite cell (MDSC) migration and differentiation.

It is found in the cytoplasm. In terms of biological role, plays a role in the regulation of cell morphology and cytoskeletal organization. Required in the cortical actin filament dynamics. In Bos taurus (Bovine), this protein is Formin-like protein 2.